A 140-amino-acid chain; its full sequence is Thioredoxin M-type, chloroplastic (140 aa).

The N-terminal 34 residues, 1–34 (MALVARRAAVPSARSSARPAFARAAPRRSVVVRA), are a transit peptide targeting the chloroplast. The 106-residue stretch at 35 to 140 (EAGAVNDDTF…IVQTVEKYLN (106 aa)) folds into the Thioredoxin domain. Residues Cys-64 and Cys-67 each act as nucleophile in the active site. Cys-64 and Cys-67 are disulfide-bonded.

This sequence belongs to the thioredoxin family. Plant M-type subfamily. Forms a complex with heterodimeric ferredoxin-thioredoxin reductase (FTR) and ferredoxin.

The protein localises to the plastid. It is found in the chloroplast. Participates in various redox reactions through the reversible oxidation of the active center dithiol to a disulfide. The M form is known to activate NADP-malate dehydrogenase. This is Thioredoxin M-type, chloroplastic (TRXM) from Chlamydomonas reinhardtii (Chlamydomonas smithii).